A 435-amino-acid chain; its full sequence is Probable alpha-galactosidase B (435 aa).

Positions 1–18 (MLTSLSLTALALLPSANA) are cleaved as a signal peptide. Cysteines 41 and 73 form a disulfide. A glycan (N-linked (GlcNAc...) asparagine) is linked at Asn81. Cys123 and Cys153 are oxidised to a cystine. The active-site Nucleophile is the Asp151. N-linked (GlcNAc...) asparagine glycans are attached at residues Asn158 and Asn176. 221–225 (DWGQA) provides a ligand contact to substrate. Asn232 is a glycosylation site (N-linked (GlcNAc...) asparagine). The active-site Proton donor is the Asp243. N-linked (GlcNAc...) asparagine glycosylation occurs at Asn378.

Belongs to the glycosyl hydrolase 27 family.

It localises to the secreted. It carries out the reaction Hydrolysis of terminal, non-reducing alpha-D-galactose residues in alpha-D-galactosides, including galactose oligosaccharides, galactomannans and galactolipids.. In terms of biological role, hydrolyzes a variety of simple alpha-D-galactoside as well as more complex molecules such as oligosaccharides and polysaccharides. The protein is Probable alpha-galactosidase B (agl1) of Penicillium simplicissimum.